Consider the following 134-residue polypeptide: Lymphocyte antigen 6F (134 aa).

Residues 1-26 (MDSCHTTKSCVLILLVVLLCAERAQG) form the signal peptide. Positions 27-119 (LECYNCLGVS…TGGSTWTMTR (93 aa)) constitute a UPAR/Ly6 domain. 5 cysteine pairs are disulfide-bonded: C29/C53, C32/C41, C46/C74, C78/C98, and C99/C104. The GPI-anchor amidated glycine moiety is linked to residue G112. A propeptide spans 113-134 (STWTMTRVLLLNLGSVFLQTLL) (removed in mature form).

It localises to the cell membrane. The sequence is that of Lymphocyte antigen 6F (Ly6f) from Mus musculus (Mouse).